Here is a 347-residue protein sequence, read N- to C-terminus: Coproporphyrinogen-III oxidase, aerobic 2 (347 aa).

Residues 1 to 31 are disordered; sequence MGRHSDNSLQESANHTVLLTSPTNTIPKDSR. The segment covering 7–31 has biased composition (polar residues); it reads NSLQESANHTVLLTSPTNTIPKDSR. The segment at 75–84 is important for dimerization; sequence VIREGRVFEQ. Ser119 contacts substrate. The active-site Proton donor is the His133. Substrate is bound by residues 135–137 and 305–310; these read NYR and KGRTES. An important for dimerization region spans residues 287–322; it reads YVEFNLVYDRGTVFGLQTKGRTESILMSLPPLARWE.

This sequence belongs to the aerobic coproporphyrinogen-III oxidase family. Homodimer.

Its subcellular location is the cytoplasm. The catalysed reaction is coproporphyrinogen III + O2 + 2 H(+) = protoporphyrinogen IX + 2 CO2 + 2 H2O. It functions in the pathway porphyrin-containing compound metabolism; protoporphyrin-IX biosynthesis; protoporphyrinogen-IX from coproporphyrinogen-III (O2 route): step 1/1. Its function is as follows. Key enzyme in heme biosynthesis. Catalyzes the oxidative decarboxylation of propionic acid side chains of rings A and B of coproporphyrinogen III. The polypeptide is Coproporphyrinogen-III oxidase, aerobic 2 (Nostoc sp. (strain PCC 7120 / SAG 25.82 / UTEX 2576)).